The primary structure comprises 1130 residues: DNA-directed RNA polymerase I subunit rpa2 (1130 aa).

The C4-type zinc finger occupies 1070–1096 (CKLCGSTLTIYSKKDYSNQTVSECKSC).

The protein belongs to the RNA polymerase beta chain family. In terms of assembly, component of the RNA polymerase I (Pol I) complex consisting of 14 subunits.

The protein resides in the nucleus. It is found in the nucleolus. It catalyses the reaction RNA(n) + a ribonucleoside 5'-triphosphate = RNA(n+1) + diphosphate. Its function is as follows. DNA-dependent RNA polymerase catalyzes the transcription of DNA into RNA using the four ribonucleoside triphosphates as substrates. Second largest core component of RNA polymerase I which synthesizes ribosomal RNA precursors. Proposed to contribute to the polymerase catalytic activity and forms the polymerase active center together with the largest subunit. Pol I is composed of mobile elements and RPA2 is part of the core element with the central large cleft and probably a clamp element that moves to open and close the cleft. The protein is DNA-directed RNA polymerase I subunit rpa2 (polr1b) of Dictyostelium discoideum (Social amoeba).